Reading from the N-terminus, the 131-residue chain is Large ribosomal subunit protein bL17 (131 aa).

Belongs to the bacterial ribosomal protein bL17 family. Part of the 50S ribosomal subunit. Contacts protein L32.

The protein is Large ribosomal subunit protein bL17 of Bordetella avium (strain 197N).